Reading from the N-terminus, the 571-residue chain is PHD and RING finger domain-containing protein C126.07c (571 aa).

The segment at 18–79 (CIICLSNLPN…RVANTCPLCR (62 aa)) adopts an RING-type 1; atypical zinc-finger fold. The PHD-type zinc finger occupies 122 to 170 (TCRCVICGRSDHAEVLLLCDGCDDAYHTYCLNMDAVPIEEFYCPNCVLL). An RING-type 2; degenerate zinc finger spans residues 125–168 (CVICGRSDHAEVLLLCDGCDDAYHTYCLNMDAVPIEEFYCPNCV). Residues 305–324 (ATEATISNPRPSSGRFQQTP) are compositionally biased toward polar residues. The interval 305-377 (ATEATISNPR…VLGNNSSSKS (73 aa)) is disordered. Over residues 346–356 (RRQKRPTRRHI) the composition is skewed to basic residues. The segment covering 359–377 (SNKSSGSSTVLGNNSSSKS) has biased composition (polar residues).

The protein localises to the cytoplasm. It is found in the nucleus. The polypeptide is PHD and RING finger domain-containing protein C126.07c (Schizosaccharomyces pombe (strain 972 / ATCC 24843) (Fission yeast)).